Here is a 312-residue protein sequence, read N- to C-terminus: Ribosomal RNA small subunit methyltransferase H (312 aa).

S-adenosyl-L-methionine is bound by residues 35 to 37 (GGH), Asp-55, Phe-85, Asp-101, and Gln-108.

This sequence belongs to the methyltransferase superfamily. RsmH family.

It localises to the cytoplasm. The enzyme catalyses cytidine(1402) in 16S rRNA + S-adenosyl-L-methionine = N(4)-methylcytidine(1402) in 16S rRNA + S-adenosyl-L-homocysteine + H(+). In terms of biological role, specifically methylates the N4 position of cytidine in position 1402 (C1402) of 16S rRNA. This chain is Ribosomal RNA small subunit methyltransferase H, found in Buchnera aphidicola subsp. Acyrthosiphon pisum (strain Tuc7).